The chain runs to 1620 residues: NAD-specific glutamate dehydrogenase (1620 aa).

Lys-851 is a catalytic residue.

It belongs to the Glu/Leu/Phe/Val dehydrogenases family. As to quaternary structure, homotetramer. Post-translationally, contains disulfide bonds (interchain).

The enzyme catalyses L-glutamate + NAD(+) + H2O = 2-oxoglutarate + NH4(+) + NADH + H(+). Its activity is regulated as follows. Activity subject to allosteric control by arginine and citrate, which function as positive and negative effectors, respectively. In terms of biological role, involved in arginine catabolism by converting L-glutamate, into 2-oxoglutarate, which is then channeled into the tricarboxylic acid cycle. Can also utilize other amino acids of the glutamate family. This Pseudomonas aeruginosa (strain ATCC 15692 / DSM 22644 / CIP 104116 / JCM 14847 / LMG 12228 / 1C / PRS 101 / PAO1) protein is NAD-specific glutamate dehydrogenase (gdhB).